We begin with the raw amino-acid sequence, 462 residues long: dTDP-4-dehydro-2,6-dideoxy-D-glucose 3-dehydratase (462 aa).

Pyridoxal 5'-phosphate-binding positions include 112–113, aspartate 220, and serine 241; that span reads GS. Catalysis depends on histidine 246, which acts as the Proton donor/acceptor. Asparagine 314 is a binding site for pyridoxal 5'-phosphate.

It belongs to the DegT/DnrJ/EryC1 family. As to quaternary structure, homodimer. Pyridoxal 5'-phosphate is required as a cofactor.

The catalysed reaction is dTDP-4-dehydro-2,6-dideoxy-alpha-D-glucose + 2 reduced [2Fe-2S]-[ferredoxin] + 2 H(+) = dTDP-4-dehydro-2,3,6-trideoxy-alpha-D-hexopyranose + 2 oxidized [2Fe-2S]-[ferredoxin] + H2O. Involved in the biosynthesis of forosamine ((4-dimethylamino)-2,3,4,6-tetradeoxy-alpha-D-threo-hexopyranose), a highly deoxygenated sugar component of several bioactive natural products such as the insecticidal spinosyns A and D. Catalyzes C-3 deoxygenation of dTDP-4-keto-2,6-dideoxy-alpha-D-glucose to yield dTDP-4-keto-2,3,6-trideoxy-D-glucose via a combined transamination-deoxygenation reaction. The catalysis is initiated by a transamination step in which pyridoxal 5'-phosphate (PLP) is converted to pyridoxamine 5'-phosphate (PMP) in the presence of L-glutamate. This coenzyme then forms a Schiff base with dTDP-4-keto-2,6-dideoxy-alpha-D-glucose and the resulting adduct undergoes a PMP-mediated beta-dehydration reaction to give a sugar enamine intermediate, which after a 2 electrons reduction and hydrolysis yields dTDP-4-keto-2,3,6-trideoxy-D-glucose as a product. Requires cellular reductase (ferredoxin or flavodoxin reductase) rather than a specific partner reductase. L-glutamate is 20-fold more efficient than L-aspartate as an amino donor. In the absence of an electron source and in the presence of L-glutamate, catalyzes a transamination reaction, converting dTDP-4-keto-2,6-dideoxy-alpha-D-glucose to dTDP-4-amino-2,4,6-trideoxy-D-glucose. This chain is dTDP-4-dehydro-2,6-dideoxy-D-glucose 3-dehydratase, found in Saccharopolyspora spinosa.